We begin with the raw amino-acid sequence, 351 residues long: Rod outer segment membrane protein 1 (351 aa).

Residues 1–19 (MAPVLPLVLPLQPRIRLAQ) are Cytoplasmic-facing. The chain crosses the membrane as a helical span at residues 20–43 (GLWLLSWLLVLVGGLTLLCSGHLL). Residues 44-64 (VQLWHLGTFLAPSCPFSALPQ) are Lumenal-facing. Residues 65-84 (VALAASAVALGTGLVGSGAS) traverse the membrane as a helical segment. The Cytoplasmic segment spans residues 85-102 (RASLDAEQYPPWRGVLGP). The helical transmembrane segment at 103-125 (LLVAGTAGGGGLLVLALGLALAL) threads the bilayer. The Lumenal segment spans residues 126–264 (PGTLDTGLEE…EVLLGHLQGL (139 aa)). The chain crosses the membrane as a helical span at residues 265-286 (ASTLGNMLAVTFLLQTLVLLGL). The Cytoplasmic segment spans residues 287 to 351 (RYLQTALEGL…KPPKECLPEA (65 aa)). The disordered stretch occupies residues 325-351 (QGAGPHRPAPGETPPEEKPPKECLPEA). Residues 339–351 (PEEKPPKECLPEA) show a composition bias toward basic and acidic residues.

This sequence belongs to the PRPH2/ROM1 family. In terms of assembly, homodimer; disulfide-linked. Forms a homotetramer. Forms a heterotetramer with PRPH2. Homotetramer and heterotetramer core complexes go on to form higher order complexes by formation of intermolecular disulfide bonds. Interacts with STX3. Interacts with SNAP25. Retina photoreceptor (at protein level). In rim region of ROS disks (at protein level).

The protein resides in the photoreceptor inner segment membrane. It is found in the photoreceptor outer segment membrane. Functionally, plays a role in rod outer segment (ROS) morphogenesis. May play a role with PRPH2 in the maintenance of the structure of ROS curved disks. Plays a role in the organization of the ROS and maintenance of ROS disk diameter. Involved in the maintenance of the retina outer nuclear layer. The protein is Rod outer segment membrane protein 1 (ROM1) of Bos taurus (Bovine).